The chain runs to 653 residues: Epithelial sodium channel subunit gamma (653 aa).

The Cytoplasmic portion of the chain corresponds to 1–54 (MGHGRRISESIKKQLPVTGPEAPTVKNLMDWYLNNTNTHGCRRIAVSRGYLRRW). Residues 55 to 75 (IWICFTVSSVGMIFWQWTLLL) traverse the membrane as a helical segment. At 76-546 (MSYYTVSVSV…GGQLGLWMSC (471 aa)) the chain is on the extracellular side. 8 disulfides stabilise this stretch: Cys-100/Cys-290, Cys-214/Cys-221, Cys-267/Cys-274, Cys-379/Cys-464, Cys-401/Cys-460, Cys-405/Cys-456, Cys-414/Cys-441, and Cys-416/Cys-430. A helical transmembrane segment spans residues 547 to 567 (SIVCFLEMWEVFLVDILTIIA). Residues 568 to 653 (RYWLHRGRQW…DEQVSDTEVN (86 aa)) are Cytoplasmic-facing. Positions 582–608 (KERQMQQPSPPDHDTGHHNPVCIDDED) are disordered.

The protein belongs to the amiloride-sensitive sodium channel (TC 1.A.6) family. SCNN1G subfamily. Component of the heterotrimeric epithelial sodium channel (ENaC) composed of an alpha/SCNN1A, a beta/SCNN1B and a gamma/SCNN1G subunit. In terms of tissue distribution, strongly expressed in gill, liver, kidney and rectum and more weakly in heart, muscle and intestine.

The protein localises to the apical cell membrane. It catalyses the reaction Na(+)(in) = Na(+)(out). Originally identified and characterized by its inhibition by the diuretic drug amiloride. Its function is as follows. This is one of the three pore-forming subunits of the heterotrimeric epithelial sodium channel (ENaC), a critical regulator of sodium balance and fluid homeostasis. ENaC operates in epithelial tissues, where it mediates the electrodiffusion of sodium ions from extracellular fluid through the apical membrane of cells, with water following osmotically. In Neoceratodus forsteri (Australian lungfish), this protein is Epithelial sodium channel subunit gamma.